A 243-amino-acid chain; its full sequence is Terpene cyclase paxB (243 aa).

7 consecutive transmembrane segments (helical) span residues 23–43 (FVVG…YISF), 49–69 (GMSI…CLVF), 78–98 (GVFW…ITFS), 112–132 (ISLI…ALAL), 134–154 (IGPA…LSVG), 172–194 (LWAS…WMYW), and 205–225 (LVLW…ICFW).

This sequence belongs to the paxB family.

Its subcellular location is the membrane. The protein operates within secondary metabolite biosynthesis. In terms of biological role, terpene cyclase; part of the ATM2 gene cluster that mediates the biosynthesis of paxilline, a mycotoxin that acts as an inhibitor of mammalian maxi-K channels. PaxG, the geranylgeranyl diphosphate (GGPP) synthase is proposed to catalyze the first step in paxilline biosynthesis. Condensation of indole-3-glycerol phosphate with GGPP by paxC then forms 3-geranylgeranylindole (3-GGI), followed by epoxidation and cyclization of this intermediate (by paxM and paxB) to form paspaline. Paspaline is subsequently converted to 13-desoxypaxilline by paxP, the latter being then converted to paxilline by paxQ. Finally paxilline can be mono- and di-prenylated by paxD. The polypeptide is Terpene cyclase paxB (Penicillium paxilli).